The chain runs to 392 residues: Chaperone protein DnaJ (392 aa).

The J domain maps to 2–67; that stretch reads DYYTILGVAK…QKRESYDRYG (66 aa). A CR-type zinc finger spans residues 149–227; the sequence is GVEKELLVSG…CRGQGRIKDK (79 aa). Residues C162, C165, C179, C182, C201, C204, C215, and C218 each coordinate Zn(2+). 4 CXXCXGXG motif repeats span residues 162–169, 179–186, 201–208, and 215–222; these read CDACSGSG, CDRCKGSG, CPDCSGEG, and CSECRGQG.

The protein belongs to the DnaJ family. Homodimer. Requires Zn(2+) as cofactor.

The protein localises to the cytoplasm. Functionally, participates actively in the response to hyperosmotic and heat shock by preventing the aggregation of stress-denatured proteins and by disaggregating proteins, also in an autonomous, DnaK-independent fashion. Unfolded proteins bind initially to DnaJ; upon interaction with the DnaJ-bound protein, DnaK hydrolyzes its bound ATP, resulting in the formation of a stable complex. GrpE releases ADP from DnaK; ATP binding to DnaK triggers the release of the substrate protein, thus completing the reaction cycle. Several rounds of ATP-dependent interactions between DnaJ, DnaK and GrpE are required for fully efficient folding. Also involved, together with DnaK and GrpE, in the DNA replication of plasmids through activation of initiation proteins. The protein is Chaperone protein DnaJ of Chlamydia muridarum (strain MoPn / Nigg).